The chain runs to 481 residues: Dihydrolipoyl dehydrogenase (481 aa).

FAD-binding positions include 34–42 (EREHMGGIC) and lysine 51. A disulfide bond links cysteine 42 and cysteine 47. Residues 195–199 (GSGAI), glutamate 218, and 284–287 (AVGV) each bind NAD(+). FAD-binding residues include aspartate 326 and alanine 334. Histidine 460 functions as the Proton acceptor in the catalytic mechanism.

Belongs to the class-I pyridine nucleotide-disulfide oxidoreductase family. Homodimer. The cofactor is FAD.

It is found in the cytoplasm. The enzyme catalyses N(6)-[(R)-dihydrolipoyl]-L-lysyl-[protein] + NAD(+) = N(6)-[(R)-lipoyl]-L-lysyl-[protein] + NADH + H(+). Its function is as follows. Lipoamide dehydrogenase is a component of the alpha-ketoacid dehydrogenase complexes. This Rhizobium etli (strain ATCC 51251 / DSM 11541 / JCM 21823 / NBRC 15573 / CFN 42) protein is Dihydrolipoyl dehydrogenase (lpdA).